A 660-amino-acid chain; its full sequence is Protein SCARECROW 2 (660 aa).

2 disordered regions span residues 1 to 33 (MGSSSLLLFPSSSSSATHSSYSPSSSSHAITSL) and 190 to 286 (SDPA…KQRD). The segment covering 192-229 (PAPPPPPPSHPALLPPDATAPPPPPTSVAALPPPPPAQ) has biased composition (pro residues). Residues 259–272 (AAAAAAAAAAAAAA) show a composition bias toward low complexity. Residues 262–289 (AAAAAAAAAAAAKERKEEQRRKQRDEEG) are a coiled coil. Positions 273-286 (AKERKEEQRRKQRD) are enriched in basic and acidic residues. The GRAS domain maps to 283 to 653 (KQRDEEGLHL…LCLLTASAWR (371 aa)). The interval 290 to 354 (LHLLTLLLQC…VSSCLGLYAP (65 aa)) is leucine repeat I (LRI). Positions 297-301 (LQCAE) match the LxCxE motif motif. The tract at residues 373–438 (FQVFNGISPF…GGPPRVRLTG (66 aa)) is VHIID. A VHIID motif is present at residues 404 to 408 (VHIID). The interval 448–480 (ATGKRLSDFADTLGLPFEFCPVADKAGNLDPEK) is leucine repeat II (LRII). The PFYRE stretch occupies residues 489-576 (VAVHWLRHSL…QQLLSREIRN (88 aa)). Positions 579–653 (AVGGPARTGD…LCLLTASAWR (75 aa)) are SAW.

Belongs to the GRAS family.

The protein resides in the cytoplasm. Functionally, probable transcription factor involved in asmmetric cell division in the cortex/endodermis progenitor cell and in the process of stomata and ligule formation in leaves. The sequence is that of Protein SCARECROW 2 (SCR2) from Oryza sativa subsp. indica (Rice).